Here is a 286-residue protein sequence, read N- to C-terminus: Bifunctional protein FolD 2 (286 aa).

Residues 165 to 167 (GRG), threonine 192, and isoleucine 233 each bind NADP(+).

Belongs to the tetrahydrofolate dehydrogenase/cyclohydrolase family. Homodimer.

It carries out the reaction (6R)-5,10-methylene-5,6,7,8-tetrahydrofolate + NADP(+) = (6R)-5,10-methenyltetrahydrofolate + NADPH. The catalysed reaction is (6R)-5,10-methenyltetrahydrofolate + H2O = (6R)-10-formyltetrahydrofolate + H(+). It functions in the pathway one-carbon metabolism; tetrahydrofolate interconversion. Its function is as follows. Catalyzes the oxidation of 5,10-methylenetetrahydrofolate to 5,10-methenyltetrahydrofolate and then the hydrolysis of 5,10-methenyltetrahydrofolate to 10-formyltetrahydrofolate. The chain is Bifunctional protein FolD 2 from Salinispora tropica (strain ATCC BAA-916 / DSM 44818 / JCM 13857 / NBRC 105044 / CNB-440).